The chain runs to 103 residues: UPF0145 protein CYB_1351 (103 aa).

This sequence belongs to the UPF0145 family.

This is UPF0145 protein CYB_1351 from Synechococcus sp. (strain JA-2-3B'a(2-13)) (Cyanobacteria bacterium Yellowstone B-Prime).